Here is a 145-residue protein sequence, read N- to C-terminus: Succinate dehydrogenase assembly factor 2, mitochondrial (145 aa).

It belongs to the SDHAF2 family. Interacts with the flavoprotein subunit within the SDH catalytic dimer.

The protein localises to the mitochondrion matrix. In terms of biological role, plays an essential role in the assembly of succinate dehydrogenase (SDH), an enzyme complex (also referred to as respiratory complex II) that is a component of both the tricarboxylic acid (TCA) cycle and the mitochondrial electron transport chain, and which couples the oxidation of succinate to fumarate with the reduction of ubiquinone (coenzyme Q) to ubiquinol. Required for flavinylation (covalent attachment of FAD) of the flavoprotein subunit of the SDH catalytic dimer. This is Succinate dehydrogenase assembly factor 2, mitochondrial from Yarrowia lipolytica (strain CLIB 122 / E 150) (Yeast).